The primary structure comprises 225 residues: Pyridoxine/pyridoxamine 5'-phosphate oxidase (225 aa).

Substrate contacts are provided by residues 21–24 (RKSY) and lysine 79. FMN contacts are provided by residues 74 to 79 (RVVLIK), 89 to 90 (YT), arginine 95, and lysine 96. The substrate site is built by tyrosine 136, arginine 140, and serine 144. FMN contacts are provided by residues 153-154 (QS) and tryptophan 197. 203 to 205 (RLH) lines the substrate pocket. Arginine 207 lines the FMN pocket.

The protein belongs to the pyridoxamine 5'-phosphate oxidase family. In terms of assembly, homodimer. FMN serves as cofactor.

It catalyses the reaction pyridoxamine 5'-phosphate + O2 + H2O = pyridoxal 5'-phosphate + H2O2 + NH4(+). The catalysed reaction is pyridoxine 5'-phosphate + O2 = pyridoxal 5'-phosphate + H2O2. It participates in cofactor metabolism; pyridoxal 5'-phosphate salvage; pyridoxal 5'-phosphate from pyridoxamine 5'-phosphate: step 1/1. The protein operates within cofactor metabolism; pyridoxal 5'-phosphate salvage; pyridoxal 5'-phosphate from pyridoxine 5'-phosphate: step 1/1. Functionally, catalyzes the oxidation of either pyridoxine 5'-phosphate (PNP) or pyridoxamine 5'-phosphate (PMP) into pyridoxal 5'-phosphate (PLP). The protein is Pyridoxine/pyridoxamine 5'-phosphate oxidase of Paracidovorax citrulli (strain AAC00-1) (Acidovorax citrulli).